Here is a 393-residue protein sequence, read N- to C-terminus: Rubredoxin-NAD(+) reductase (393 aa).

FAD is bound by residues 9-12, 33-34, Lys42, Val80, Glu162, Asp282, Val294, and Lys325; these read SGMA and CA.

This sequence belongs to the FAD-dependent oxidoreductase family. Homodimer. FAD serves as cofactor.

Its subcellular location is the cytoplasm. The enzyme catalyses 2 reduced [rubredoxin] + NAD(+) + H(+) = 2 oxidized [rubredoxin] + NADH. The protein operates within hydrocarbon metabolism; alkane degradation. Functionally, involved in the hydrocarbon hydroxylating system, which transfers electrons from NADH to rubredoxin reductase and then through rubredoxin to alkane 1 monooxygenase. This is Rubredoxin-NAD(+) reductase (rubB) from Acinetobacter baylyi (strain ATCC 33305 / BD413 / ADP1).